The chain runs to 180 residues: Large ribosomal subunit protein uL5 (180 aa).

Belongs to the universal ribosomal protein uL5 family. As to quaternary structure, part of the 50S ribosomal subunit; part of the 5S rRNA/L5/L18/L25 subcomplex. Contacts the 5S rRNA and the P site tRNA. Forms a bridge to the 30S subunit in the 70S ribosome.

Functionally, this is one of the proteins that bind and probably mediate the attachment of the 5S RNA into the large ribosomal subunit, where it forms part of the central protuberance. In the 70S ribosome it contacts protein S13 of the 30S subunit (bridge B1b), connecting the 2 subunits; this bridge is implicated in subunit movement. Contacts the P site tRNA; the 5S rRNA and some of its associated proteins might help stabilize positioning of ribosome-bound tRNAs. The chain is Large ribosomal subunit protein uL5 from Xanthomonas campestris pv. campestris (strain 8004).